We begin with the raw amino-acid sequence, 395 residues long: Univin (395 aa).

The first 19 residues, 1-19, serve as a signal peptide directing secretion; the sequence is MDVSKVLILTLIWLLTADS. A propeptide spanning residues 20–272 is cleaved from the precursor; it reads APPDYVTLTR…CSKRNRRNKR (253 aa). N-linked (GlcNAc...) asparagine glycosylation occurs at Asn-50. The tract at residues 69–97 is disordered; that stretch reads EGAAASRGGETEIGKEEEEDGRPCSETKL. Residues Asn-116 and Asn-336 are each glycosylated (N-linked (GlcNAc...) asparagine). Cystine bridges form between Cys-294–Cys-360, Cys-323–Cys-392, and Cys-327–Cys-394.

This sequence belongs to the TGF-beta family. As to quaternary structure, homodimer; disulfide-linked.

Its subcellular location is the secreted. In terms of biological role, could have a critical role in early developmental decisions in the sea urchin embryo. The polypeptide is Univin (Strongylocentrotus purpuratus (Purple sea urchin)).